Consider the following 217-residue polypeptide: ATP phosphoribosyltransferase (217 aa).

It belongs to the ATP phosphoribosyltransferase family. Short subfamily. In terms of assembly, heteromultimer composed of HisG and HisZ subunits.

Its subcellular location is the cytoplasm. The catalysed reaction is 1-(5-phospho-beta-D-ribosyl)-ATP + diphosphate = 5-phospho-alpha-D-ribose 1-diphosphate + ATP. Its pathway is amino-acid biosynthesis; L-histidine biosynthesis; L-histidine from 5-phospho-alpha-D-ribose 1-diphosphate: step 1/9. Its function is as follows. Catalyzes the condensation of ATP and 5-phosphoribose 1-diphosphate to form N'-(5'-phosphoribosyl)-ATP (PR-ATP). Has a crucial role in the pathway because the rate of histidine biosynthesis seems to be controlled primarily by regulation of HisG enzymatic activity. In Burkholderia multivorans (strain ATCC 17616 / 249), this protein is ATP phosphoribosyltransferase.